The chain runs to 60 residues: Toxin S4C8 (60 aa).

Intrachain disulfides connect Cys3/Cys22, Cys17/Cys39, Cys41/Cys52, and Cys53/Cys58. Residues 41 to 48 are important for binding to L-type calcium channels; sequence CPTAMWPY.

Belongs to the three-finger toxin family. Short-chain subfamily. L-type calcium blocker sub-subfamily. In terms of tissue distribution, expressed by the venom gland.

The protein resides in the secreted. This specific blocker of the L-type calcium channel (Cav1/CACNA1) is a smooth muscle relaxant and an inhibitor of cardiac contractions. In Dendroaspis jamesoni kaimosae (Eastern Jameson's mamba), this protein is Toxin S4C8.